The chain runs to 559 residues: 2-isopropylmalate synthase (559 aa).

A Pyruvate carboxyltransferase domain is found at P33 to D307. Mg(2+)-binding residues include D42, H246, H248, and N282. The segment at A439–A559 is regulatory domain.

This sequence belongs to the alpha-IPM synthase/homocitrate synthase family. LeuA type 2 subfamily. In terms of assembly, homodimer. Requires Mg(2+) as cofactor.

It localises to the cytoplasm. It catalyses the reaction 3-methyl-2-oxobutanoate + acetyl-CoA + H2O = (2S)-2-isopropylmalate + CoA + H(+). It participates in amino-acid biosynthesis; L-leucine biosynthesis; L-leucine from 3-methyl-2-oxobutanoate: step 1/4. Functionally, catalyzes the condensation of the acetyl group of acetyl-CoA with 3-methyl-2-oxobutanoate (2-ketoisovalerate) to form 3-carboxy-3-hydroxy-4-methylpentanoate (2-isopropylmalate). This chain is 2-isopropylmalate synthase, found in Pseudomonas fluorescens (strain ATCC BAA-477 / NRRL B-23932 / Pf-5).